The following is a 497-amino-acid chain: Proline--tRNA ligase (497 aa).

This sequence belongs to the class-II aminoacyl-tRNA synthetase family. ProS type 3 subfamily. Homodimer.

The protein resides in the cytoplasm. The enzyme catalyses tRNA(Pro) + L-proline + ATP = L-prolyl-tRNA(Pro) + AMP + diphosphate. In terms of biological role, catalyzes the attachment of proline to tRNA(Pro) in a two-step reaction: proline is first activated by ATP to form Pro-AMP and then transferred to the acceptor end of tRNA(Pro). The protein is Proline--tRNA ligase of Deinococcus geothermalis (strain DSM 11300 / CIP 105573 / AG-3a).